Consider the following 308-residue polypeptide: UDP-N-acetylenolpyruvoylglucosamine reductase (308 aa).

The FAD-binding PCMH-type domain maps to 35-200 (RVGGPAQVLF…TSARFRGEPM (166 aa)). Arginine 180 is an active-site residue. Positions 211–226 (EVQRHRETAQPVREKT) are enriched in basic and acidic residues. The interval 211–236 (EVQRHRETAQPVREKTGGSTFKNPPG) is disordered. The active-site Proton donor is serine 229. The active site involves glutamate 299.

Belongs to the MurB family. FAD is required as a cofactor.

It is found in the cytoplasm. It catalyses the reaction UDP-N-acetyl-alpha-D-muramate + NADP(+) = UDP-N-acetyl-3-O-(1-carboxyvinyl)-alpha-D-glucosamine + NADPH + H(+). Its pathway is cell wall biogenesis; peptidoglycan biosynthesis. Functionally, cell wall formation. The polypeptide is UDP-N-acetylenolpyruvoylglucosamine reductase (Rhodopseudomonas palustris (strain BisB18)).